The following is a 1347-amino-acid chain: Protein HUA2-LIKE 3 (1347 aa).

Residues 24-81 (VGDLVLAKVKGFPAWPAVVDEPEKWGHSADSKKVTVHFFGTQQIAFCNHGDVESFTEE) form the PWWP domain. Disordered stretches follow at residues 110 to 137 (KLKQ…TSQL), 251 to 320 (DGGP…SGSK), and 383 to 402 (DSCQ…PCEE). Residues 127–137 (TAGSSGNTSQL) show a composition bias toward polar residues. Low complexity predominate over residues 302–314 (VESNNNSRNEGNG). The span at 390 to 402 (NSHERLNERPCEE) shows a compositional bias: basic and acidic residues. The CID domain occupies 845–986 (DVQCTVESFE…HHIRELDSLS (142 aa)). Disordered stretches follow at residues 1037–1069 (RDED…VTPS), 1121–1140 (TSHQ…QNAQ), 1147–1223 (YSNG…YSYM), and 1259–1347 (RMRP…WHQR). Positions 1038 to 1049 (DEDEGSDSDGGD) are enriched in acidic residues. Over residues 1054–1069 (TPEHESRSLEEHVTPS) the composition is skewed to basic and acidic residues. Polar residues predominate over residues 1181–1191 (PSYSSRVSLSK). Over residues 1208–1217 (SSHPPPPPPS) the composition is skewed to pro residues. Positions 1259 to 1272 (RMRPEPCENRDNWR) are enriched in basic and acidic residues.

Expressed throughout young primordia, and vegetative and reproductive apices.

It localises to the nucleus. In terms of biological role, probable transcription factor that acts with partial redundancy with HULK1 and HULK2. Plays diverse and essential roles in the control of plant development, physiology and flowering time. The sequence is that of Protein HUA2-LIKE 3 from Arabidopsis thaliana (Mouse-ear cress).